Reading from the N-terminus, the 335-residue chain is Putative serine/threonine-protein kinase 040L (335 aa).

The region spanning Tyr-33 to Leu-329 is the Protein kinase domain. Residues His-39–Ile-47 and Lys-62 contribute to the ATP site. Residue Asp-196 is the Proton acceptor of the active site.

Belongs to the protein kinase superfamily. Ser/Thr protein kinase family.

In Invertebrate iridescent virus 3 (IIV-3), this protein is Putative serine/threonine-protein kinase 040L.